Reading from the N-terminus, the 743-residue chain is Mitochondrial exoribonuclease DSS-1 (743 aa).

Residues 1–67 (MTPRRVAKLV…KELLHLQRSL (67 aa)) constitute a mitochondrion transit peptide. Residues 186-542 (THNPAYAIDS…VHHQLKVWLW (357 aa)) enclose the RNB domain. Residues 320–357 (VGNQHHHTERESTQASPAKREEGKKGMVASGGTSSCRP) are disordered. Residues 325 to 344 (HHTERESTQASPAKREEGKK) show a composition bias toward basic and acidic residues.

It belongs to the RNR ribonuclease family. In terms of assembly, component of the mitochondrial 3' processome (MPsome) complex composed at least of terminal uridylyltransferase KRET1/TUT1, 3'-5' exonuclease DSS1, MPSS1, MPSS2 and MPSS3. Within the complex, interacts with KRET1 and MPSS2. Component of the mitochondrial degradosome complex composed at least of 3'-5' exonuclease DSS1 and helicase SUV3. Within the complex, interacts with helicase SUV3.

Its subcellular location is the mitochondrion. The enzyme catalyses Exonucleolytic cleavage in the 3'- to 5'-direction to yield nucleoside 5'-phosphates.. Functionally, 3'-5'exoribonuclease which is involved in the post-transcriptional processing, editing and degradation of mitochondrial RNAs, including mRNAs, rRNAs and guided RNAs (gRNA). As part of the mitochondrial 3' processome (MPsome), involved in the maturation of guided RNA (gRNA) precursors by catalyzing the processive 3'-5' degradation of uridylated gRNA precursors. Plays a role in the degradation of 12S rRNA processing intermediates and maturation by-products. This is Mitochondrial exoribonuclease DSS-1 from Trypanosoma brucei brucei.